A 368-amino-acid polypeptide reads, in one-letter code: UDP-galactose/UDP-N-acetylglucosamine transporter srf-3 (368 aa).

8 helical membrane passes run 72-92, 118-138, 145-165, 174-194, 203-223, 235-254, 273-293, and 317-337; these read FVST…CLFL, LKVC…YVAA, TFMI…VIIL, WFAL…GTKA, FVGF…GIYF, LWMR…FSAI, SIVW…AVCI, and IFLF…LVIF.

It belongs to the nucleotide-sugar transporter family. SLC35A subfamily. Expressed exclusively in pharyngeal cells g1 and g2, lateral seam cells, spermatheca and vas deferens.

It localises to the golgi apparatus membrane. Acts as a transporter of both UDP-galactose and UDP-N-acetylglucosamine into the Golgi lumen. Apparently transports UDP-galactose and UDP-N-acetylglucosamine simultaneously, and independently, by an unknown mechanism. Functions redundantly with nucleotide sugar transporter nstp-4. May be involved in gonadal development. In Caenorhabditis elegans, this protein is UDP-galactose/UDP-N-acetylglucosamine transporter srf-3 (srf-3).